Reading from the N-terminus, the 279-residue chain is Alcohol dehydrogenase-related 31 kDa protein (279 aa).

Position 11 to 34 (11 to 34) interacts with NAD(+); the sequence is YVADCGGIALETSKVLMTKNIAKL. Residue Ser139 coordinates substrate. Tyr152 serves as the catalytic Proton acceptor.

This sequence belongs to the short-chain dehydrogenases/reductases (SDR) family.

This Drosophila subobscura (Fruit fly) protein is Alcohol dehydrogenase-related 31 kDa protein (Adhr).